The sequence spans 38 residues: Mu-hexatoxin-Mg1b (38 aa).

3 cysteine pairs are disulfide-bonded: Cys1–Cys15, Cys8–Cys20, and Cys14–Cys34. Serine amide is present on Ser38.

This sequence belongs to the neurotoxin 14 (magi-1) family. 09 (magi-1) subfamily. As to expression, expressed by the venom gland.

The protein resides in the secreted. Insecticidal neurotoxin. Shows competition for site 3 of insect voltage-gated sodium channels (Nav). In Macrothele gigas (Japanese funnel web spider), this protein is Mu-hexatoxin-Mg1b.